Here is a 331-residue protein sequence, read N- to C-terminus: Large ribosomal subunit protein uL3 (331 aa).

The protein belongs to the universal ribosomal protein uL3 family. In terms of assembly, part of the 50S ribosomal subunit. Forms a cluster with proteins L14 and L24e.

One of the primary rRNA binding proteins, it binds directly near the 3'-end of the 23S rRNA, where it nucleates assembly of the 50S subunit. The chain is Large ribosomal subunit protein uL3 from Archaeoglobus fulgidus (strain ATCC 49558 / DSM 4304 / JCM 9628 / NBRC 100126 / VC-16).